We begin with the raw amino-acid sequence, 238 residues long: Probable transcriptional regulatory protein CHU_3516 (238 aa).

It belongs to the TACO1 family.

The protein localises to the cytoplasm. This chain is Probable transcriptional regulatory protein CHU_3516, found in Cytophaga hutchinsonii (strain ATCC 33406 / DSM 1761 / CIP 103989 / NBRC 15051 / NCIMB 9469 / D465).